The following is a 3118-amino-acid chain: Laminin subunit alpha-2 (3118 aa).

An N-terminal signal peptide occupies residues 1 to 19 (MPAATAGILLLLLLGTLEG). One can recognise a Laminin N-terminal domain in the interval 31-282 (QQRGLFPAVL…SVKDISVGGM (252 aa)). Residues Asn51 and Asn85 are each glycosylated (N-linked (GlcNAc...) asparagine). 6 disulfide bridges follow: Cys283–Cys292, Cys285–Cys303, Cys305–Cys314, Cys317–Cys337, Cys340–Cys349, and Cys342–Cys374. Laminin EGF-like domains follow at residues 283–339 (CICY…ECEA), 340–409 (CNCH…PCQP), 410–464 (CHCD…DCQP), and 465–513 (CNCS…GCEE). A glycan (N-linked (GlcNAc...) asparagine) is linked at Asn299. N-linked (GlcNAc...) asparagine glycosylation is found at Asn359 and Asn376. Cystine bridges form between Cys377-Cys386, Cys389-Cys407, Cys410-Cys422, Cys412-Cys438, Cys440-Cys449, Cys452-Cys462, Cys465-Cys478, Cys467-Cys482, Cys484-Cys493, and Cys496-Cys511. Asn466 is a glycosylation site (N-linked (GlcNAc...) asparagine). The Laminin EGF-like 5; first part domain occupies 514–523 (CFCSGVSNRC). The Laminin IV type A 1 domain maps to 527–719 (YWTYGNIQDM…DRRIATDVEV (193 aa)). A Laminin EGF-like 5; second part domain is found at 720–752 (CQCPPGYSGSSCETCWPRHRRVNGTIFGGICEP). Residue Asn742 is glycosylated (N-linked (GlcNAc...) asparagine). 32 disulfide bridges follow: Cys753–Cys762, Cys755–Cys769, Cys772–Cys781, Cys784–Cys800, Cys803–Cys818, Cys805–Cys828, Cys831–Cys840, Cys843–Cys858, Cys861–Cys875, Cys863–Cys882, Cys885–Cys894, Cys897–Cys911, Cys914–Cys926, Cys916–Cys933, Cys935–Cys944, Cys947–Cys960, Cys963–Cys975, Cys965–Cys981, Cys983–Cys992, Cys995–Cys1007, Cys1010–Cys1019, Cys1012–Cys1026, Cys1028–Cys1037, Cys1040–Cys1053, Cys1056–Cys1068, Cys1058–Cys1075, Cys1077–Cys1086, Cys1089–Cys1099, Cys1102–Cys1114, Cys1104–Cys1130, Cys1132–Cys1141, and Cys1144–Cys1159. 8 Laminin EGF-like domains span residues 753 to 802 (CQCF…DCQP), 803 to 860 (CACP…SCQP), 861 to 913 (CQCN…NCQP), 914 to 962 (CRCN…GCLP), 963 to 1009 (CNCN…GCIA), 1010 to 1055 (CDCS…GCKV), 1056 to 1101 (CNCS…LCTL), and 1102 to 1161 (CDCF…GCSS). Asn919 carries N-linked (GlcNAc...) asparagine glycosylation. Asn1031 carries N-linked (GlcNAc...) asparagine glycosylation. N-linked (GlcNAc...) asparagine glycosylation is present at Asn1057. In terms of domain architecture, Laminin EGF-like 14; first part spans 1162–1171 (CYCFGVTSQC). A Laminin IV type A 2 domain is found at 1172 to 1375 (SEAKGLIRTW…GSPPAHLIER (204 aa)). The Laminin EGF-like 14; second part domain occupies 1376–1415 (CDCPPGYSGLSCETCAPGFYRLRSEPGGRTPGPTLGTCVP). 13 cysteine pairs are disulfide-bonded: Cys1378/Cys1387, Cys1416/Cys1425, Cys1418/Cys1432, Cys1435/Cys1444, Cys1447/Cys1462, Cys1465/Cys1480, Cys1467/Cys1490, Cys1493/Cys1502, Cys1505/Cys1520, Cys1523/Cys1535, Cys1525/Cys1542, Cys1544/Cys1553, and Cys1556/Cys1567. Laminin EGF-like domains lie at 1416-1464 (CQCN…DCQP), 1465-1522 (CACP…SCQE), and 1523-1569 (CECD…ECVF). The interval 1570 to 2140 (CGDECTGLLL…NQARKQANSI (571 aa)) is domain II and I. N-linked (GlcNAc...) asparagine glycans are attached at residues Asn1593, Asn1610, Asn1696, Asn1806, Asn1897, Asn1912, Asn1916, Asn2013, Asn2024, Asn2041, Asn2122, and Asn2236. Positions 1662 to 1863 (QDAERTNSRA…DIKTKLPPMS (202 aa)) form a coiled coil. The stretch at 1923–2146 (AYSNIKDYID…ANSIKVSVSS (224 aa)) forms a coiled coil. 5 Laminin G-like domains span residues 2141–2324 (KVSV…CKGC), 2336–2517 (TIQF…TKGC), 2522–2706 (VYTV…IGRC), 2759–2930 (SKQF…VGTC), and 2929–3115 (TCFA…PVSC). Cys2298 and Cys2324 are joined by a disulfide. N-linked (GlcNAc...) asparagine glycosylation is found at Asn2356, Asn2431, and Asn2474. The cysteines at positions 2491 and 2517 are disulfide-linked. 3 N-linked (GlcNAc...) asparagine glycosylation sites follow: Asn2547, Asn2554, and Asn2644. Cys2679 and Cys2706 are joined by a disulfide. N-linked (GlcNAc...) asparagine glycosylation occurs at Asn2889. 2 disulfide bridges follow: Cys2905–Cys2930 and Cys3083–Cys3115.

Laminin is a complex glycoprotein, consisting of three different polypeptide chains (alpha, beta, gamma), which are bound to each other by disulfide bonds into a cross-shaped molecule comprising one long and three short arms with globules at each end. Alpha-2 is a subunit of laminin-2 (laminin-211 or merosin), laminin-4 (laminin-221 or S-merosin) and laminin-12 (laminin-213). Interacts with FBLN1, FBLN2 and NID2.

It localises to the secreted. The protein resides in the extracellular space. It is found in the extracellular matrix. The protein localises to the basement membrane. Its function is as follows. Binding to cells via a high affinity receptor, laminin is thought to mediate the attachment, migration and organization of cells into tissues during embryonic development by interacting with other extracellular matrix components. The protein is Laminin subunit alpha-2 (Lama2) of Mus musculus (Mouse).